A 180-amino-acid chain; its full sequence is Cell division protein SepF (180 aa).

The interval 1-66 (MAFSFKSFFG…NRNGFAYDNG (66 aa)) is disordered. Over residues 12–23 (ADDEEEEYEDSG) the composition is skewed to acidic residues. The span at 24–57 (YEQQPNQGQQQPVNSQQQNTSNQSYSGYNNQNQN) shows a compositional bias: low complexity.

The protein belongs to the SepF family. Homodimer. Interacts with FtsZ.

Its subcellular location is the cytoplasm. Cell division protein that is part of the divisome complex and is recruited early to the Z-ring. Probably stimulates Z-ring formation, perhaps through the cross-linking of FtsZ protofilaments. Its function overlaps with FtsA. This is Cell division protein SepF from Oenococcus oeni (strain ATCC BAA-331 / PSU-1).